Here is a 286-residue protein sequence, read N- to C-terminus: 4-hydroxybenzoate octaprenyltransferase (286 aa).

Transmembrane regions (helical) follow at residues 20–40 (IGTL…AGGM), 43–63 (LKVL…GCII), 96–116 (LFVI…GLVV), 142–162 (FLGV…TGEV), 167–187 (WWLF…YAMV), 210–230 (QIIG…GWSA), 235–255 (VYGL…MLIF), and 266–286 (FLNN…DYLF).

This sequence belongs to the UbiA prenyltransferase family. Requires Mg(2+) as cofactor.

The protein resides in the cell inner membrane. The catalysed reaction is all-trans-octaprenyl diphosphate + 4-hydroxybenzoate = 4-hydroxy-3-(all-trans-octaprenyl)benzoate + diphosphate. It functions in the pathway cofactor biosynthesis; ubiquinone biosynthesis. Functionally, catalyzes the prenylation of para-hydroxybenzoate (PHB) with an all-trans polyprenyl group. Mediates the second step in the final reaction sequence of ubiquinone-8 (UQ-8) biosynthesis, which is the condensation of the polyisoprenoid side chain with PHB, generating the first membrane-bound Q intermediate 3-octaprenyl-4-hydroxybenzoate. This chain is 4-hydroxybenzoate octaprenyltransferase, found in Shewanella oneidensis (strain ATCC 700550 / JCM 31522 / CIP 106686 / LMG 19005 / NCIMB 14063 / MR-1).